The primary structure comprises 357 residues: Peptide chain release factor 1 (357 aa).

An N5-methylglutamine modification is found at glutamine 234. A disordered region spans residues 283–313 (SKKQEQRSSNRKQQVGSGDRSERIRTYNFPQ).

Belongs to the prokaryotic/mitochondrial release factor family. Post-translationally, methylated by PrmC. Methylation increases the termination efficiency of RF1.

It localises to the cytoplasm. Peptide chain release factor 1 directs the termination of translation in response to the peptide chain termination codons UAG and UAA. The polypeptide is Peptide chain release factor 1 (prfA) (Borreliella burgdorferi (strain ATCC 35210 / DSM 4680 / CIP 102532 / B31) (Borrelia burgdorferi)).